The chain runs to 514 residues: Serine/threonine-protein kinase 33 (514 aa).

Residues 65 to 86 are compositionally biased toward basic and acidic residues; that stretch reads INRDITSRKDLPSRTSNVERKA. Positions 65-91 are disordered; it reads INRDITSRKDLPSRTSNVERKASQQQW. The Protein kinase domain maps to 116–381; sequence YTFGRILGKG…AKELLDNQWL (266 aa). Residues 122 to 130 and Lys145 each bind ATP; that span reads LGKGSFGIV. Residue Asp238 is the Proton acceptor of the active site. Disordered stretches follow at residues 402–468 and 485–514; these read KNNP…DMCS and MEKT…KKKL. Phosphoserine is present on Ser407. Over residues 413–426 the composition is skewed to basic and acidic residues; the sequence is TEEKNKPSTEEKLK. The segment covering 449-468 has biased composition (polar residues); sequence STAYEKQFPATSKDNFDMCS.

It belongs to the protein kinase superfamily. CAMK Ser/Thr protein kinase family. CaMK subfamily. In terms of assembly, homodimer. In terms of processing, autophosphorylated. As to expression, highly expressed in testis, fetal lung and heart, followed by pituitary gland, kidney, interventricular septum, pancreas, heart, trachea, thyroid gland and uterus. Weak hybridization signals were observed in the following tissues: amygdala, aorta, esophagus, colon ascending, colon transverse, skeletal muscle, spleen, peripheral blood leukocyte, lymph node, bone marrow, placenta, prostate, liver, salivary gland, mammary gland, some tumor cell lines, fetal brain, fetal liver, fetal spleen and fetal thymus. No signal at all was detectable in RNA from tissues of the nervous system.

The protein resides in the cytoplasm. The protein localises to the cytoskeleton. It localises to the perinuclear region. The enzyme catalyses L-seryl-[protein] + ATP = O-phospho-L-seryl-[protein] + ADP + H(+). It catalyses the reaction L-threonyl-[protein] + ATP = O-phospho-L-threonyl-[protein] + ADP + H(+). Its activity is regulated as follows. Specifically inhibited by CDD-2807 ((3-([1,1'-Biphenyl]-2-ylethynyl)-1H-indazol-5-yl)(2,6-diazaspiro[3.5]nonan-2-yl)methanone). Functionally, serine/threonine protein kinase required for spermatid differentiation and male fertility. Promotes sperm flagella assembly during spermatogenesis by mediating phosphorylation of fibrous sheath proteins AKAP3 and AKAP4. Also phosphorylates vimentin/VIM, thereby regulating the dynamic behavior of the intermediate filament cytoskeleton. This chain is Serine/threonine-protein kinase 33, found in Homo sapiens (Human).